Here is a 184-residue protein sequence, read N- to C-terminus: Zinc metalloproteinase-disintegrin-like ammodytagin (184 aa).

In terms of domain architecture, Peptidase M12B spans K1–P90. Position 20 (D20) interacts with Ca(2+). Position 64 (H64) interacts with Zn(2+). The active site involves E65. Residues H68 and H74 each contribute to the Zn(2+) site. Ca(2+)-binding residues include N88, V100, N103, F105, and E107. The region spanning P98–R124 is the Disintegrin domain. Intrachain disulfides connect C114–C120 and C165–C177.

The protein belongs to the venom metalloproteinase (M12B) family. P-III subfamily. P-IIIc sub-subfamily. In terms of assembly, heterodimer; disulfide-linked. Requires Zn(2+) as cofactor. The N-terminus is blocked. Post-translationally, N-glycosylated. Expressed by the venom gland.

The protein resides in the secreted. With respect to regulation, inhibited by EDTA, DTT and zinc ions. Partially inhibited by L-cysteine. Not inhibited by 2-propanol or PMSF. Activity is enhanced by calcium or magnesium ions. Functionally, snake venom zinc metalloprotease that has fibrinogenolytic and hemorrhagic activities in mouse and rats. Hydrolyzes the Aalpha-chain (FGA) and more slowly the Bbeta-chain of fibrinogen (FGB), without affecting the gamma-chain. Its hemorrhagic activity results of its involvement in cleavage of basal membrane components (nidogen and fibronectin but not laminin) and depletion of fibrinogen, prothrombin (F2) and factor X (F10) in blood circulation. Also possess potent azocaseinolytic activity and cleaves insulin B-chain, hydrolyzing it at positions Gln(4)-His(5), His(10)-Leu(11) and Tyr(16)-Leu(17). This Vipera ammodytes ammodytes (Western sand viper) protein is Zinc metalloproteinase-disintegrin-like ammodytagin.